An 89-amino-acid polypeptide reads, in one-letter code: Small ribosomal subunit protein uS17 (89 aa).

This sequence belongs to the universal ribosomal protein uS17 family. In terms of assembly, part of the 30S ribosomal subunit.

Functionally, one of the primary rRNA binding proteins, it binds specifically to the 5'-end of 16S ribosomal RNA. The chain is Small ribosomal subunit protein uS17 from Xylella fastidiosa (strain M12).